A 363-amino-acid chain; its full sequence is Carbamoyl phosphate synthase small chain (363 aa).

CPSase stretches follow at residues 1-168 (MTKR…ASPG) and 1-172 (MTKR…DGKR). L-glutamine is bound by residues Ser-46, Gly-220, and Gly-222. The Glutamine amidotransferase type-1 domain maps to 172–359 (RVVLVDYGVK…MEMMNVKEEG (188 aa)). The Nucleophile role is filled by Cys-247. L-glutamine contacts are provided by Leu-248, Gln-251, Asn-289, Gly-291, and Tyr-292. Catalysis depends on residues His-332 and Glu-334.

It belongs to the CarA family. In terms of assembly, composed of two chains; the small (or glutamine) chain promotes the hydrolysis of glutamine to ammonia, which is used by the large (or ammonia) chain to synthesize carbamoyl phosphate. Tetramer of heterodimers (alpha,beta)4.

It catalyses the reaction hydrogencarbonate + L-glutamine + 2 ATP + H2O = carbamoyl phosphate + L-glutamate + 2 ADP + phosphate + 2 H(+). The catalysed reaction is L-glutamine + H2O = L-glutamate + NH4(+). The protein operates within amino-acid biosynthesis; L-arginine biosynthesis; carbamoyl phosphate from bicarbonate: step 1/1. It participates in pyrimidine metabolism; UMP biosynthesis via de novo pathway; (S)-dihydroorotate from bicarbonate: step 1/3. In terms of biological role, small subunit of the glutamine-dependent carbamoyl phosphate synthetase (CPSase). CPSase catalyzes the formation of carbamoyl phosphate from the ammonia moiety of glutamine, carbonate, and phosphate donated by ATP, constituting the first step of 2 biosynthetic pathways, one leading to arginine and/or urea and the other to pyrimidine nucleotides. The small subunit (glutamine amidotransferase) binds and cleaves glutamine to supply the large subunit with the substrate ammonia. This chain is Carbamoyl phosphate synthase small chain, found in Listeria innocua serovar 6a (strain ATCC BAA-680 / CLIP 11262).